The chain runs to 80 residues: Cell division activator CedA (80 aa).

The protein belongs to the CedA family.

Its function is as follows. Activates the cell division inhibited by chromosomal DNA over-replication. The chain is Cell division activator CedA from Escherichia coli (strain SMS-3-5 / SECEC).